The sequence spans 442 residues: Tyrosine-protein kinase transforming protein RYK (442 aa).

Residues 45-316 (LSLGKVLGEG…QLKVHLEKLL (272 aa)) enclose the Protein kinase domain. Residues 51-59 (LGEGEFGSV) and Lys77 contribute to the ATP site. Asp181 serves as the catalytic Proton acceptor. Tyr212 carries the post-translational modification Phosphotyrosine; by autocatalysis.

It belongs to the protein kinase superfamily. Tyr protein kinase family. AXL/UFO subfamily.

It is found in the host cell membrane. It carries out the reaction L-tyrosyl-[protein] + ATP = O-phospho-L-tyrosyl-[protein] + ADP + H(+). The polypeptide is Tyrosine-protein kinase transforming protein RYK (V-RYK) (Avian retrovirus RPL30).